A 182-amino-acid chain; its full sequence is NADH-quinone oxidoreductase subunit I (182 aa).

2 consecutive 4Fe-4S ferredoxin-type domains span residues 52-82 and 92-121; these read LTRD…LQKA and DFFR…LTPD. Cys62, Cys65, Cys68, Cys72, Cys101, Cys104, Cys107, and Cys111 together coordinate [4Fe-4S] cluster.

This sequence belongs to the complex I 23 kDa subunit family. In terms of assembly, NDH-1 is composed of 13 different subunits. Subunits NuoA, H, J, K, L, M, N constitute the membrane sector of the complex. Requires [4Fe-4S] cluster as cofactor.

It localises to the cell inner membrane. It catalyses the reaction a quinone + NADH + 5 H(+)(in) = a quinol + NAD(+) + 4 H(+)(out). Functionally, NDH-1 shuttles electrons from NADH, via FMN and iron-sulfur (Fe-S) centers, to quinones in the respiratory chain. The immediate electron acceptor for the enzyme in this species is believed to be ubiquinone. Couples the redox reaction to proton translocation (for every two electrons transferred, four hydrogen ions are translocated across the cytoplasmic membrane), and thus conserves the redox energy in a proton gradient. This is NADH-quinone oxidoreductase subunit I from Pseudomonas fluorescens (strain Pf0-1).